The primary structure comprises 324 residues: DNA-directed RNA polymerase subunit alpha (324 aa).

Residues 1–228 (MIEIQKPTIR…EHFNLFTDLS (228 aa)) are alpha N-terminal domain (alpha-NTD). The interval 245 to 324 (RNKLLDMTIE…STPKGEEEEK (80 aa)) is alpha C-terminal domain (alpha-CTD).

This sequence belongs to the RNA polymerase alpha chain family. In terms of assembly, homodimer. The RNAP catalytic core consists of 2 alpha, 1 beta, 1 beta' and 1 omega subunit. When a sigma factor is associated with the core the holoenzyme is formed, which can initiate transcription.

It catalyses the reaction RNA(n) + a ribonucleoside 5'-triphosphate = RNA(n+1) + diphosphate. Functionally, DNA-dependent RNA polymerase catalyzes the transcription of DNA into RNA using the four ribonucleoside triphosphates as substrates. The protein is DNA-directed RNA polymerase subunit alpha of Caldicellulosiruptor saccharolyticus (strain ATCC 43494 / DSM 8903 / Tp8T 6331).